Reading from the N-terminus, the 282-residue chain is Pantothenate synthetase (282 aa).

Residue 30–37 (MGFLHDGH) coordinates ATP. Catalysis depends on histidine 37, which acts as the Proton donor. (R)-pantoate is bound at residue glutamine 60. A beta-alanine-binding site is contributed by glutamine 60. 146–149 (GQKD) is a binding site for ATP. A (R)-pantoate-binding site is contributed by glutamine 152. Residues isoleucine 175 and 183–186 (KSSR) each bind ATP.

This sequence belongs to the pantothenate synthetase family. As to quaternary structure, homodimer.

Its subcellular location is the cytoplasm. It catalyses the reaction (R)-pantoate + beta-alanine + ATP = (R)-pantothenate + AMP + diphosphate + H(+). Its pathway is cofactor biosynthesis; (R)-pantothenate biosynthesis; (R)-pantothenate from (R)-pantoate and beta-alanine: step 1/1. In terms of biological role, catalyzes the condensation of pantoate with beta-alanine in an ATP-dependent reaction via a pantoyl-adenylate intermediate. The polypeptide is Pantothenate synthetase (Campylobacter jejuni subsp. jejuni serotype O:6 (strain 81116 / NCTC 11828)).